A 160-amino-acid polypeptide reads, in one-letter code: Putative 4-hydroxy-4-methyl-2-oxoglutarate aldolase (160 aa).

Substrate is bound by residues 78–81 (GDVI) and arginine 100. Aspartate 101 is a binding site for a divalent metal cation.

Belongs to the class II aldolase/RraA-like family. Homotrimer. The cofactor is a divalent metal cation.

The catalysed reaction is 4-hydroxy-4-methyl-2-oxoglutarate = 2 pyruvate. It carries out the reaction oxaloacetate + H(+) = pyruvate + CO2. Functionally, catalyzes the aldol cleavage of 4-hydroxy-4-methyl-2-oxoglutarate (HMG) into 2 molecules of pyruvate. Also contains a secondary oxaloacetate (OAA) decarboxylase activity due to the common pyruvate enolate transition state formed following C-C bond cleavage in the retro-aldol and decarboxylation reactions. This chain is Putative 4-hydroxy-4-methyl-2-oxoglutarate aldolase, found in Mycolicibacterium paratuberculosis (strain ATCC BAA-968 / K-10) (Mycobacterium paratuberculosis).